The sequence spans 236 residues: MTKRYWNIDLEEMMRAGVHFGHGTRKWNPRMAPYISAKRKGIHIINLTRTARFLSEACDLVFDAASRGKQFLIVGTKNKAADLVSRAAIRARCHYVNKKWLGGMLTNWSTTEKRLHKFRDLRTEQKTEGFNRLPKRDAAVLKRQLSRLKTYLGGIKYMTGLPDIVIIIDQQEEYTALRECITLGIPTISLIDTNCNPDLADISIPANDDAIASIRFILNKLVFAIGEGRSSYIQNS.

It belongs to the universal ribosomal protein uS2 family.

It is found in the plastid. The protein localises to the chloroplast. The polypeptide is Small ribosomal subunit protein uS2c (rps2) (Lepidium virginicum (Virginia pepperweed)).